Reading from the N-terminus, the 562-residue chain is Protein FAM83D-B (562 aa).

Positions 424 to 472 are disordered; it reads ITTQTTETSQCTTQTPAPTSSVARLSNSSNSSSSSFSSASTTSTGSNCS. The span at 425–472 shows a compositional bias: low complexity; the sequence is TTQTTETSQCTTQTPAPTSSVARLSNSSNSSSSSFSSASTTSTGSNCS.

Belongs to the FAM83 family.

The protein resides in the cytoplasm. It localises to the cytoskeleton. The protein localises to the spindle. It is found in the spindle pole. Its function is as follows. May regulate cell proliferation, growth, migration and epithelial to mesenchymal transition. May also be important for proper chromosome congression and alignment during mitosis. The protein is Protein FAM83D-B of Xenopus laevis (African clawed frog).